A 1009-amino-acid chain; its full sequence is Type VII secretion system accessory factor EsaA (1009 aa).

Residues 7–27 form a helical membrane-spanning segment; the sequence is IYALIVTLIIIIAIVSMIFFV. Basic and acidic residues predominate over residues 680-697; the sequence is TFAEEPQEPKIDKGKNDE. The segment at 680-707 is disordered; the sequence is TFAEEPQEPKIDKGKNDEFNTMSSNLDK. The next 5 helical transmembrane spans lie at 822–842, 869–889, 903–923, 928–948, and 979–999; these read ISPTLFVLLMYLLSMITAYIF, VITSGVIGTTGLVEGLIVGLI, KFILMVILTMMVFVLINTYLL, SIGMFLMIAALGLYFVAMNNL, and IGLVLVILTVLVIIGFVLNMF.

This sequence belongs to the EsaA family. Homodimer. Interacts with EssB.

Its subcellular location is the cell membrane. In terms of biological role, component of the type VII secretion system (Ess). Provides together with EssB and other components such as EssC and EssE a secretion platform across the cytoplasmic membrane in the host. The chain is Type VII secretion system accessory factor EsaA from Staphylococcus aureus (strain COL).